We begin with the raw amino-acid sequence, 288 residues long: Small ribosomal subunit protein uS2 (288 aa).

Over residues 259–276 (EAAPAAEEAPAAEAEAAA) the composition is skewed to low complexity. Positions 259–288 (EAAPAAEEAPAAEAEAAATDTSSESDKTEA) are disordered.

The protein belongs to the universal ribosomal protein uS2 family.

This Maricaulis maris (strain MCS10) (Caulobacter maris) protein is Small ribosomal subunit protein uS2.